Consider the following 71-residue polypeptide: Delta-actitoxin-Avd2b 4 (71 aa).

Positions 1–20 (MMNRLLVFLMLGAFMLVVSA) are cleaved as a signal peptide. A propeptide spanning residues 21-41 (NDAYGDEPAFKDLNQGDESLG) is cleaved from the precursor. Intrachain disulfides connect C46–C61, C47–C55, and C49–C66.

The protein belongs to the sea anemone short toxin (type III) family.

The protein localises to the secreted. It is found in the nematocyst. Its function is as follows. Voltage-gated sodium channel (Nav) inhibitor. 1 uM completely inhibits insect voltage-gated sodium channel inactivation (DmNav1 from D.melanogaster). This chain is Delta-actitoxin-Avd2b 4, found in Anemonia viridis (Snakelocks anemone).